Consider the following 501-residue polypeptide: DDB1- and CUL4-associated factor 12-like protein 1 (501 aa).

Residues 1-37 (MRQADSQTQPSPAEQETPQPAGPSNRSPPTMGPQQTG) are compositionally biased toward polar residues. The segment at 1–67 (MRQADSQTQP…PAAPMATAGE (67 aa)) is disordered. WD repeat units follow at residues 185–225 (PPSC…PVCL), 230–268 (GHRDWIFAIAWMSDTVAVSGSRDGTVALWKVDPDMFNGS), 298–337 (PGNRKVRALAFSNKNQELGAVSLDGYFHLWKARSSLSRLL), and 384–423 (SREGGTGVRSLSVHQHIVTVGTGHGSLLFYDIRAQKFLEE).

The protein belongs to the WD repeat DCAF12 family.

The sequence is that of DDB1- and CUL4-associated factor 12-like protein 1 (Dcaf12l1) from Mus musculus (Mouse).